A 277-amino-acid chain; its full sequence is MTETFEMSPYQPVIDPLVIGERQFTSRLMLGTGKYKNLDEAKKSITASGCQILTVAVRRAQNSTIQSMGNLITGLDWSKIWLMPNTAGCQTAQEAIRVAFLGREITKNIGFENNNFTKLEVIPDPKYLLPDGLGTLLAAEYLVSKNFTVLPYINADPILAKQLENAGCATVMPLGSPIGSGQGLKNLSNIQIIIENANVPVIVDAGIGTPSQAAQAMEIGAGGVLANTAVAKAQNAPQMAYAMQLGVLAGRAAFQAGKIDAGKLAQPSSPIVGLSKK.

Lys-118 serves as the catalytic Schiff-base intermediate with DXP. 1-deoxy-D-xylulose 5-phosphate contacts are provided by residues Gly-179, 205–206 (AG), and 227–228 (NT).

Belongs to the ThiG family. In terms of assembly, homotetramer. Forms heterodimers with either ThiH or ThiS.

Its subcellular location is the plastid. It localises to the chloroplast. The catalysed reaction is [ThiS sulfur-carrier protein]-C-terminal-Gly-aminoethanethioate + 2-iminoacetate + 1-deoxy-D-xylulose 5-phosphate = [ThiS sulfur-carrier protein]-C-terminal Gly-Gly + 2-[(2R,5Z)-2-carboxy-4-methylthiazol-5(2H)-ylidene]ethyl phosphate + 2 H2O + H(+). It functions in the pathway cofactor biosynthesis; thiamine diphosphate biosynthesis. Its function is as follows. Catalyzes the rearrangement of 1-deoxy-D-xylulose 5-phosphate (DXP) to produce the thiazole phosphate moiety of thiamine. Sulfur is provided by the thiocarboxylate moiety of the carrier protein ThiS. In vitro, sulfur can be provided by H(2)S. The protein is Thiazole synthase of Emiliania huxleyi (Coccolithophore).